The following is a 967-amino-acid chain: Isoleucine--tRNA ligase (967 aa).

Residues 68 to 78 (PYANGTLHMGH) carry the 'HIGH' region motif. E583 lines the L-isoleucyl-5'-AMP pocket. Positions 624–628 (KMSKS) match the 'KMSKS' region motif. An ATP-binding site is contributed by K627. Zn(2+)-binding residues include C937, C940, C957, and C960.

It belongs to the class-I aminoacyl-tRNA synthetase family. IleS type 1 subfamily. Monomer. It depends on Zn(2+) as a cofactor.

Its subcellular location is the cytoplasm. The enzyme catalyses tRNA(Ile) + L-isoleucine + ATP = L-isoleucyl-tRNA(Ile) + AMP + diphosphate. Catalyzes the attachment of isoleucine to tRNA(Ile). As IleRS can inadvertently accommodate and process structurally similar amino acids such as valine, to avoid such errors it has two additional distinct tRNA(Ile)-dependent editing activities. One activity is designated as 'pretransfer' editing and involves the hydrolysis of activated Val-AMP. The other activity is designated 'posttransfer' editing and involves deacylation of mischarged Val-tRNA(Ile). In Prochlorococcus marinus (strain NATL1A), this protein is Isoleucine--tRNA ligase.